A 568-amino-acid polypeptide reads, in one-letter code: Proline--tRNA ligase (568 aa).

This sequence belongs to the class-II aminoacyl-tRNA synthetase family. ProS type 1 subfamily. Homodimer.

The protein localises to the cytoplasm. It catalyses the reaction tRNA(Pro) + L-proline + ATP = L-prolyl-tRNA(Pro) + AMP + diphosphate. Its function is as follows. Catalyzes the attachment of proline to tRNA(Pro) in a two-step reaction: proline is first activated by ATP to form Pro-AMP and then transferred to the acceptor end of tRNA(Pro). As ProRS can inadvertently accommodate and process non-cognate amino acids such as alanine and cysteine, to avoid such errors it has two additional distinct editing activities against alanine. One activity is designated as 'pretransfer' editing and involves the tRNA(Pro)-independent hydrolysis of activated Ala-AMP. The other activity is designated 'posttransfer' editing and involves deacylation of mischarged Ala-tRNA(Pro). The misacylated Cys-tRNA(Pro) is not edited by ProRS. This Chlamydia pneumoniae (Chlamydophila pneumoniae) protein is Proline--tRNA ligase.